Reading from the N-terminus, the 317-residue chain is Nicotianamine synthase (317 aa).

It belongs to the nicotianamine synthase (NAS)-like family. Homomultimer. As to expression, leaves and roots.

It catalyses the reaction 3 S-adenosyl-L-methionine = nicotianamine + 3 S-methyl-5'-thioadenosine + 3 H(+). Synthesizes nicotianamine, a polyamine that serves as a sensor for the physiological iron status within the plant, and/or might be involved in the transport of iron. This chain is Nicotianamine synthase (CHLN), found in Solanum lycopersicum (Tomato).